The sequence spans 390 residues: L-seryl-tRNA(Sec) selenium transferase (390 aa).

Position 225 is an N6-(pyridoxal phosphate)lysine (lysine 225).

Belongs to the SelA family. Requires pyridoxal 5'-phosphate as cofactor.

Its subcellular location is the cytoplasm. The enzyme catalyses L-seryl-tRNA(Sec) + selenophosphate + H(+) = L-selenocysteinyl-tRNA(Sec) + phosphate. The protein operates within aminoacyl-tRNA biosynthesis; selenocysteinyl-tRNA(Sec) biosynthesis; selenocysteinyl-tRNA(Sec) from L-seryl-tRNA(Sec) (bacterial route): step 1/1. Functionally, converts seryl-tRNA(Sec) to selenocysteinyl-tRNA(Sec) required for selenoprotein biosynthesis. The polypeptide is L-seryl-tRNA(Sec) selenium transferase (Helicobacter pylori (strain J99 / ATCC 700824) (Campylobacter pylori J99)).